The sequence spans 413 residues: uncharacterized protein (413 aa).

Disordered regions lie at residues 108-158 (ESVP…SKIS) and 232-257 (DRLG…RLGA). Residue serine 115 is modified to Phosphoserine. Polar residues predominate over residues 127-139 (SAASRMIANSLNH). Position 141 is a phosphoserine (serine 141). A Glycyl lysine isopeptide (Lys-Gly) (interchain with G-Cter in SUMO2) cross-link involves residue lysine 239. A phosphoserine mark is found at serine 269 and serine 296. Residues 290–336 (RGPTKASAQPALTVKAKAASSATSTATTPKLRRLALPSRPGLQKKPD) form a disordered region. Positions 302-318 (TVKAKAASSATSTATTP) are enriched in low complexity. Phosphoserine is present on serine 342.

This is an uncharacterized protein from Mus musculus (Mouse).